The sequence spans 421 residues: Testin (421 aa).

The 108-residue stretch at M92–D199 folds into the PET domain. Positions K134–C164 are disordered. Positions P155–C164 are enriched in basic and acidic residues. 3 consecutive LIM zinc-binding domains span residues Y234–E297, P299–V359, and Q362–S421.

This sequence belongs to the prickle / espinas / testin family. Interacts via LIM domain 1 with ZYX. Interacts (via LIM domain 3) with ENAH and VASP. Interacts with ALKBH4, talin, actin, alpha-actinin, GRIP1 and PXN. Interacts (via LIM domain 2) with ACTL7A (via N-terminus). Heterodimer with ACTL7A; the heterodimer interacts with ENAH to form a heterotrimer.

It localises to the cytoplasm. Its subcellular location is the cell junction. The protein localises to the focal adhesion. Its function is as follows. Scaffold protein that may play a role in cell adhesion, cell spreading and in the reorganization of the actin cytoskeleton. Plays a role in the regulation of cell proliferation. May act as a tumor suppressor. The sequence is that of Testin (TES) from Rhinolophus ferrumequinum (Greater horseshoe bat).